The primary structure comprises 238 residues: Proteasome subunit beta type-6 (238 aa).

N-acetylalanine is present on Ala-2. The propeptide at 2–33 (AAALAVRRAGSAPAFGPEALTPDWENREVSTG) is removed in mature form. The active-site Nucleophile is the Thr-34. Thr-68 bears the Phosphothreonine mark.

This sequence belongs to the peptidase T1B family. As to quaternary structure, the 26S proteasome consists of a 20S proteasome core and two 19S regulatory subunits. The 20S proteasome core is a barrel-shaped complex made of 28 subunits that are arranged in four stacked rings. The two outer rings are each formed by seven alpha subunits, and the two inner rings are formed by seven beta subunits. The proteolytic activity is exerted by three beta-subunits PSMB5, PSMB6 and PSMB7.

It localises to the cytoplasm. The protein resides in the nucleus. The enzyme catalyses Cleavage of peptide bonds with very broad specificity.. Its function is as follows. Component of the 20S core proteasome complex involved in the proteolytic degradation of most intracellular proteins. This complex plays numerous essential roles within the cell by associating with different regulatory particles. Associated with two 19S regulatory particles, forms the 26S proteasome and thus participates in the ATP-dependent degradation of ubiquitinated proteins. The 26S proteasome plays a key role in the maintenance of protein homeostasis by removing misfolded or damaged proteins that could impair cellular functions, and by removing proteins whose functions are no longer required. Associated with the PA200 or PA28, the 20S proteasome mediates ubiquitin-independent protein degradation. This type of proteolysis is required in several pathways including spermatogenesis (20S-PA200 complex) or generation of a subset of MHC class I-presented antigenic peptides (20S-PA28 complex). Within the 20S core complex, PSMB6 displays a peptidylglutamyl-hydrolyzing activity also termed postacidic or caspase-like activity, meaning that the peptides bond hydrolysis occurs directly after acidic residues. The protein is Proteasome subunit beta type-6 (Psmb6) of Mus musculus (Mouse).